A 795-amino-acid polypeptide reads, in one-letter code: Phenylalanine--tRNA ligase beta subunit (795 aa).

One can recognise a tRNA-binding domain in the interval 39–148 (AGSFHGVVVG…ADAPIGTDIR (110 aa)). Residues 401–476 (PKRATITLRR…RVYGYNNIPD (76 aa)) enclose the B5 domain. Residues Asp-454, Asp-460, Glu-463, and Glu-464 each contribute to the Mg(2+) site. The 94-residue stretch at 701 to 794 (SRFPANRRDI…LKERFQASLR (94 aa)) folds into the FDX-ACB domain.

The protein belongs to the phenylalanyl-tRNA synthetase beta subunit family. Type 1 subfamily. Tetramer of two alpha and two beta subunits. Requires Mg(2+) as cofactor.

It localises to the cytoplasm. The catalysed reaction is tRNA(Phe) + L-phenylalanine + ATP = L-phenylalanyl-tRNA(Phe) + AMP + diphosphate + H(+). This is Phenylalanine--tRNA ligase beta subunit from Shigella dysenteriae serotype 1 (strain Sd197).